A 344-amino-acid chain; its full sequence is Aurora kinase B (344 aa).

Residues 1–22 (MAQKENSYPWPYGRQTAPSGLS) are disordered. Residue threonine 35 is modified to Phosphothreonine. The residue at position 62 (serine 62) is a Phosphoserine. Phosphothreonine is present on threonine 64. The region spanning 77–327 (FEIGRPLGKG…LAQVSAHPWV (251 aa)) is the Protein kinase domain. ATP is bound by residues 83 to 91 (LGKGKFGNV) and lysine 106. The Proton acceptor role is filled by aspartate 200. At lysine 215 the chain carries N6-acetyllysine. Serine 227 carries the phosphoserine modification. Threonine 232 carries the post-translational modification Phosphothreonine; by autocatalysis.

The protein belongs to the protein kinase superfamily. Ser/Thr protein kinase family. Aurora subfamily. In terms of assembly, component of the chromosomal passenger complex (CPC) composed of at least BIRC5/survivin, CDCA8/borealin, INCENP, AURKB or AURKC; predominantly independent AURKB- and AURKC-containing complexes exist. Associates with RACGAP1 during M phase. Interacts with SPDYC; this interaction may be required for proper localization of active, Thr-232-phosphorylated AURKB form during prometaphase and metaphase. Interacts with p53/TP53. Interacts (via the middle kinase domain) with NOC2L (via the N- and C-terminus domains). Interacts with CDCA1. Interacts with EVI5. Interacts with JTB. Interacts with NDC80. Interacts with PSMA3. Interacts with RNF2/RING1B. Interacts with SEPTIN1. Interacts with SIRT2. Interacts with TACC1. Interacts with TTC28. In terms of processing, the phosphorylation of Thr-232 requires the binding to INCENP and occurs by means of an autophosphorylation mechanism. Thr-232 phosphorylation is indispensable for the AURKB kinase activity. Acetylated at Lys-215 by KAT5 at kinetochores, increasing AURKB activity and promoting accurate chromosome segregation in mitosis. Post-translationally, ubiquitinated by different BCR (BTB-CUL3-RBX1) E3 ubiquitin ligase complexes. Ubiquitinated by the BCR(KLHL9-KLHL13) E3 ubiquitin ligase complex, ubiquitination leads to removal from mitotic chromosomes and is required for cytokinesis. During anaphase, the BCR(KLHL21) E3 ubiquitin ligase complex recruits the CPC complex from chromosomes to the spindle midzone and mediates the ubiquitination of AURKB. Ubiquitination of AURKB by BCR(KLHL21) E3 ubiquitin ligase complex may not lead to its degradation by the proteasome. Deubiquitinated by USP35; inhibiting CDH1-mediated degradation of AURKB. In terms of tissue distribution, high level expression seen in the thymus. It is also expressed in the spleen, lung, testis, colon, placenta and fetal liver. Expressed during S and G2/M phase and expression is up-regulated in cancer cells during M phase. Not expressed in normal liver, high expression in metastatic liver.

It localises to the nucleus. It is found in the chromosome. Its subcellular location is the centromere. The protein localises to the kinetochore. The protein resides in the cytoplasm. It localises to the cytoskeleton. It is found in the spindle. Its subcellular location is the midbody. The catalysed reaction is L-seryl-[protein] + ATP = O-phospho-L-seryl-[protein] + ADP + H(+). It catalyses the reaction L-threonyl-[protein] + ATP = O-phospho-L-threonyl-[protein] + ADP + H(+). Activity is greatly increased when AURKB is within the CPC complex. In particular, AURKB-phosphorylated INCENP acts as an activator of AURKB. Positive feedback between HASPIN and AURKB contributes to CPC localization. Inhibited by ZM447439. Its function is as follows. Serine/threonine-protein kinase component of the chromosomal passenger complex (CPC), a complex that acts as a key regulator of mitosis. The CPC complex has essential functions at the centromere in ensuring correct chromosome alignment and segregation and is required for chromatin-induced microtubule stabilization and spindle assembly. Involved in the bipolar attachment of spindle microtubules to kinetochores and is a key regulator for the onset of cytokinesis during mitosis. Required for central/midzone spindle assembly and cleavage furrow formation. Key component of the cytokinesis checkpoint, a process required to delay abscission to prevent both premature resolution of intercellular chromosome bridges and accumulation of DNA damage: phosphorylates CHMP4C, leading to retain abscission-competent VPS4 (VPS4A and/or VPS4B) at the midbody ring until abscission checkpoint signaling is terminated at late cytokinesis. AURKB phosphorylates the CPC complex subunits BIRC5/survivin, CDCA8/borealin and INCENP. Phosphorylation of INCENP leads to increased AURKB activity. Other known AURKB substrates involved in centromeric functions and mitosis are CENPA, DES/desmin, GPAF, KIF2C, NSUN2, RACGAP1, SEPTIN1, VIM/vimentin, HASPIN, and histone H3. A positive feedback loop involving HASPIN and AURKB contributes to localization of CPC to centromeres. Phosphorylation of VIM controls vimentin filament segregation in cytokinetic process, whereas histone H3 is phosphorylated at 'Ser-10' and 'Ser-28' during mitosis (H3S10ph and H3S28ph, respectively). AURKB is also required for kinetochore localization of BUB1 and SGO1. Phosphorylation of p53/TP53 negatively regulates its transcriptional activity. Key regulator of active promoters in resting B- and T-lymphocytes: acts by mediating phosphorylation of H3S28ph at active promoters in resting B-cells, inhibiting RNF2/RING1B-mediated ubiquitination of histone H2A and enhancing binding and activity of the USP16 deubiquitinase at transcribed genes. Acts as an inhibitor of CGAS during mitosis: catalyzes phosphorylation of the N-terminus of CGAS during the G2-M transition, blocking CGAS liquid phase separation and activation, and thereby preventing CGAS-induced autoimmunity. Phosphorylates KRT5 during anaphase and telophase. Phosphorylates ATXN10 which promotes phosphorylation of ATXN10 by PLK1 and may play a role in the regulation of cytokinesis and stimulating the proteasomal degradation of ATXN10. The polypeptide is Aurora kinase B (AURKB) (Homo sapiens (Human)).